Here is a 398-residue protein sequence, read N- to C-terminus: UDP-N-acetylglucosamine--N-acetylmuramyl-(pentapeptide) pyrophosphoryl-undecaprenol N-acetylglucosamine transferase (398 aa).

Residues 15-17 (TGG), Asn125, Arg168, Ser196, and Gln297 contribute to the UDP-N-acetyl-alpha-D-glucosamine site.

This sequence belongs to the glycosyltransferase 28 family. MurG subfamily.

The protein localises to the cell inner membrane. It catalyses the reaction di-trans,octa-cis-undecaprenyl diphospho-N-acetyl-alpha-D-muramoyl-L-alanyl-D-glutamyl-meso-2,6-diaminopimeloyl-D-alanyl-D-alanine + UDP-N-acetyl-alpha-D-glucosamine = di-trans,octa-cis-undecaprenyl diphospho-[N-acetyl-alpha-D-glucosaminyl-(1-&gt;4)]-N-acetyl-alpha-D-muramoyl-L-alanyl-D-glutamyl-meso-2,6-diaminopimeloyl-D-alanyl-D-alanine + UDP + H(+). It functions in the pathway cell wall biogenesis; peptidoglycan biosynthesis. Cell wall formation. Catalyzes the transfer of a GlcNAc subunit on undecaprenyl-pyrophosphoryl-MurNAc-pentapeptide (lipid intermediate I) to form undecaprenyl-pyrophosphoryl-MurNAc-(pentapeptide)GlcNAc (lipid intermediate II). The polypeptide is UDP-N-acetylglucosamine--N-acetylmuramyl-(pentapeptide) pyrophosphoryl-undecaprenol N-acetylglucosamine transferase (Erythrobacter litoralis (strain HTCC2594)).